We begin with the raw amino-acid sequence, 463 residues long: Putative glycine--tRNA ligase, cytoplasmic (463 aa).

Residues threonine 25 to glutamate 54 form a disordered region. A compositionally biased stretch (basic and acidic residues) spans asparagine 44–glutamate 54. Positions 153 and 239 each coordinate substrate. Residues arginine 271–glutamate 273 and leucine 281–phenylalanine 286 contribute to the ATP site. Substrate-binding positions include phenylalanine 286–glutamate 290 and asparagine 376. Glutamate 398–cysteine 399 is an ATP binding site.

This sequence belongs to the class-II aminoacyl-tRNA synthetase family. In terms of assembly, homodimer.

It localises to the cytoplasm. The catalysed reaction is tRNA(Gly) + glycine + ATP = glycyl-tRNA(Gly) + AMP + diphosphate. Catalyzes the attachment of glycine to tRNA(Gly). Is also able produce diadenosine tetraphosphate (Ap4A), a universal pleiotropic signaling molecule needed for cell regulation pathways, by direct condensation of 2 ATPs. The chain is Putative glycine--tRNA ligase, cytoplasmic from Arabidopsis thaliana (Mouse-ear cress).